Consider the following 269-residue polypeptide: Protein TIFY 11B (269 aa).

A Tify domain is found at P100–E135. The interval P160–Q181 is disordered. The segment covering E164–Q181 has biased composition (polar residues). The Jas signature appears at I186–Q210. Residues A187 to R194 carry the Nuclear localization signal motif. Positions Y209–L269 are disordered. Residues M250 to L269 are compositionally biased toward basic and acidic residues.

This sequence belongs to the TIFY/JAZ family. In terms of assembly, homo- and heterodimer. Interacts with MYC2, AFPH2/NINJA, TIFY10A/JAZ1, TIFY10B/JAZ2, TIFY11A/JAZ5, TIFY5A/JAZ8, TIFY9/JAZ10 and TIFY3B/JAZ12. (Microbial infection) Interacts with the pathogenic Pseudomonas syringae HopZ1a protein. In terms of processing, (Microbial infection) Acetylated by Pseudomonas syringae HopZ1a. Ubiquitinated. Targeted for degradation by the SCF(COI1) E3 ubiquitin ligase-proteasome pathway during jasmonate signaling.

The protein resides in the nucleus. Its subcellular location is the cell membrane. Its function is as follows. Repressor of jasmonate responses. This is Protein TIFY 11B from Arabidopsis thaliana (Mouse-ear cress).